The following is a 296-amino-acid chain: Ribosomal protein L11 methyltransferase (296 aa).

Residues T147, G168, D190, and N232 each contribute to the S-adenosyl-L-methionine site.

The protein belongs to the methyltransferase superfamily. PrmA family.

It localises to the cytoplasm. It carries out the reaction L-lysyl-[protein] + 3 S-adenosyl-L-methionine = N(6),N(6),N(6)-trimethyl-L-lysyl-[protein] + 3 S-adenosyl-L-homocysteine + 3 H(+). Functionally, methylates ribosomal protein L11. This Marinomonas sp. (strain MWYL1) protein is Ribosomal protein L11 methyltransferase.